The chain runs to 348 residues: Protein pelota homolog (348 aa).

Belongs to the eukaryotic release factor 1 family. Pelota subfamily. Monomer. Requires a divalent metal cation as cofactor.

Its subcellular location is the cytoplasm. In terms of biological role, may function in recognizing stalled ribosomes, interact with stem-loop structures in stalled mRNA molecules, and effect endonucleolytic cleavage of the mRNA. May play a role in the release non-functional ribosomes and degradation of damaged mRNAs. Has endoribonuclease activity. In Methanococcus maripaludis (strain DSM 14266 / JCM 13030 / NBRC 101832 / S2 / LL), this protein is Protein pelota homolog.